Reading from the N-terminus, the 54-residue chain is Large ribosomal subunit protein bL33C (54 aa).

Belongs to the bacterial ribosomal protein bL33 family.

The protein is Large ribosomal subunit protein bL33C of Streptomyces griseus subsp. griseus (strain JCM 4626 / CBS 651.72 / NBRC 13350 / KCC S-0626 / ISP 5235).